Here is a 233-residue protein sequence, read N- to C-terminus: Peroxisomal membrane protein 11-5 (233 aa).

Over 1–92 (MSSLESARAD…PLILLGKSKN (92 aa)) the chain is Cytoplasmic. Residues 93 to 113 (ALLSTFLFLDQIVWAGRTGIY) traverse the membrane as a helical segment. Residues 114 to 206 (KNKERAEFLS…LLQLAPKKVT (93 aa)) are Lumenal-facing. A helical transmembrane segment spans residues 207 to 226 (PRVTGAFGFASSLIACYQLL).

This sequence belongs to the peroxin-11 family. Expressed in seedlings, roots, shoots, leaf sheaths, flag leaf, panicles, spikelets, and endosperm.

It localises to the peroxisome membrane. Functionally, involved in peroxisomal proliferation. The chain is Peroxisomal membrane protein 11-5 (PEX11-5) from Oryza sativa subsp. japonica (Rice).